The primary structure comprises 302 residues: Epoxyqueuosine reductase (302 aa).

The active-site Proton donor is Asp-128. The 4Fe-4S ferredoxin-type 1 domain maps to 170–202 (LPLQADGPIRDYCGTCTACIDACPTDAITPYEV). The [4Fe-4S] cluster site is built by Cys-182, Cys-185, Cys-188, Cys-192, Cys-207, Cys-234, Cys-237, and Cys-241. The 4Fe-4S ferredoxin-type 2 domain occupies 221-251 (NEFKGKMENWIFGCDICQDVCPWNSFARPHS).

The protein belongs to the QueG family. Monomer. It depends on cob(II)alamin as a cofactor. [4Fe-4S] cluster is required as a cofactor.

The protein resides in the cytoplasm. It catalyses the reaction epoxyqueuosine(34) in tRNA + AH2 = queuosine(34) in tRNA + A + H2O. Its pathway is tRNA modification; tRNA-queuosine biosynthesis. Its function is as follows. Catalyzes the conversion of epoxyqueuosine (oQ) to queuosine (Q), which is a hypermodified base found in the wobble positions of tRNA(Asp), tRNA(Asn), tRNA(His) and tRNA(Tyr). The sequence is that of Epoxyqueuosine reductase from Leadbetterella byssophila (strain DSM 17132 / JCM 16389 / KACC 11308 / NBRC 106382 / 4M15).